The sequence spans 230 residues: 2,3-bisphosphoglycerate-dependent phosphoglycerate mutase (230 aa).

Residues 8–15, 21–22, arginine 60, 87–90, lysine 98, 114–115, and 183–184 each bind substrate; these read RHGESEWN, TG, ERHY, RR, and GN. The Tele-phosphohistidine intermediate role is filled by histidine 9. Glutamate 87 (proton donor/acceptor) is an active-site residue.

The protein belongs to the phosphoglycerate mutase family. BPG-dependent PGAM subfamily.

The catalysed reaction is (2R)-2-phosphoglycerate = (2R)-3-phosphoglycerate. Its pathway is carbohydrate degradation; glycolysis; pyruvate from D-glyceraldehyde 3-phosphate: step 3/5. Functionally, catalyzes the interconversion of 2-phosphoglycerate and 3-phosphoglycerate. This Streptococcus gordonii (strain Challis / ATCC 35105 / BCRC 15272 / CH1 / DL1 / V288) protein is 2,3-bisphosphoglycerate-dependent phosphoglycerate mutase.